Reading from the N-terminus, the 752-residue chain is Complement C2 (752 aa).

Residues 1–20 (MGPLMVLFCLLFLYPGLADS) form the signal peptide. Sushi domains follow at residues 22–86 (PSCP…VCKP), 87–146 (VRCP…VCDN), and 149–206 (GHCP…ICRQ). 6 disulfide bridges follow: Cys-24–Cys-64, Cys-51–Cys-84, Cys-89–Cys-131, Cys-117–Cys-144, Cys-151–Cys-191, and Cys-177–Cys-204. An N-linked (GlcNAc...) asparagine glycan is attached at Asn-29. An N-linked (GlcNAc...) asparagine glycan is attached at Asn-112. The VWFA domain occupies 254 to 452 (NLYLLLDCSQ…KALHQVFEHM (199 aa)). Positions 260–264 (DCSQS) match the MIDAS-like motif motif. Residues Ser-262 and Ser-264 each coordinate Mg(2+). Mn(2+) contacts are provided by Ser-262 and Ser-264. 2 N-linked (GlcNAc...) asparagine glycosylation sites follow: Asn-290 and Asn-333. Mg(2+) is bound at residue Thr-337. Residue Thr-337 coordinates Mn(2+). Cystine bridges form between Cys-463/Cys-581, Cys-492/Cys-508, and Cys-584/Cys-600. The 281-residue stretch at 464 to 744 (GVGNMSANAS…MQPWLRQHLG (281 aa)) folds into the Peptidase S1 domain. Asn-467 and Asn-471 each carry an N-linked (GlcNAc...) asparagine glycan. Active-site charge relay system residues include His-507 and Asp-561. The N-linked (GlcNAc...) asparagine glycan is linked to Asn-621. Cystine bridges form between Cys-638–Cys-665 and Cys-675–Cys-705. Residue Asn-651 is glycosylated (N-linked (GlcNAc...) (complex) asparagine). Ser-679 functions as the Charge relay system in the catalytic mechanism.

The protein belongs to the peptidase S1 family. As to quaternary structure, serine protease component of the C3 convertase, also named C4bC2b, composed of the serine protease complement C2b and complement C4b. Serine protease component of the C5 convertase, also named C4bC2bC3b, composed of the serine protease complement C2b, complement C3b, as well as complement C4b. (Microbial infection) Interacts with Schistosoma haematobium TOR (via N-terminal extracellular domain). This results in inhibition of the classical and lectin pathway of complement activation, probably due to interference with binding of C2a to C4b such that C3 convertase cannot be formed. This infers resistance to complement-mediated cell lysis, allowing parasite survival and infection. It depends on Mg(2+) as a cofactor. Requires Mn(2+) as cofactor. Post-translationally, cleaved and activated by different proteases depending on the complement pathway to generate complement C2a and serine protease complement C2b chains. Cleaved and activated by C1S following activation by the classical complement system. Cleaved and activated by MASP2 following activation by the lectin complement system. Cleaved and activated by GZMK following activation by the GZMK complement system.

It localises to the secreted. The protein resides in the cell surface. The enzyme catalyses Selective cleavage of Arg-|-Ser bond in complement component C3 alpha-chain to form C3a and C3b, and Arg-|-Xaa bond in complement component C5 alpha-chain to form C5a and C5b.. Its function is as follows. Precursor of the catalytic component of the C3 and C5 convertase complexes, which are part of the complement pathway, a cascade of proteins that leads to phagocytosis and breakdown of pathogens and signaling that strengthens the adaptive immune system. Component C2 is part of the classical, lectin and GZMK complement systems. In terms of biological role, catalytic component of the complement C3 and C5 convertase complexes. Following complement activation, recruited to the surface of pathogens by complement C4b opsonin to form the C3 convertase, or C3b and C4b opsonins to form the C5 convertase. As part of the C3 convertase, cleaves and activate C3 into C3a anaphylatoxin and C3b opsonin, the next components of the complement pathways. As part of the C5 convertase, cleaves and activate C5 into C5a anaphylatoxin and C5b component of the membrane attack complex. In Homo sapiens (Human), this protein is Complement C2.